The primary structure comprises 230 residues: Cytochrome c oxidase subunit 2 (230 aa).

Topologically, residues 1–14 are mitochondrial intermembrane; sequence MAHPSQLGFQDAAS. Residues 15-45 traverse the membrane as a helical segment; sequence PVMEELLHFHDHALMIVLLISTLVLYIIVAM. Topologically, residues 46–59 are mitochondrial matrix; sequence VSTKLTNMYILDSQ. A helical membrane pass occupies residues 60–87; sequence EIEIVWTVLPAVILILIALPSLRILYLM. Over 88-230 the chain is Mitochondrial intermembrane; sequence DEINDPHLTI…KWSTMMLEDA (143 aa). Cu cation contacts are provided by histidine 161, cysteine 196, glutamate 198, cysteine 200, histidine 204, and methionine 207. Glutamate 198 is a binding site for Mg(2+).

Belongs to the cytochrome c oxidase subunit 2 family. Component of the cytochrome c oxidase (complex IV, CIV), a multisubunit enzyme composed of 14 subunits. The complex is composed of a catalytic core of 3 subunits MT-CO1, MT-CO2 and MT-CO3, encoded in the mitochondrial DNA, and 11 supernumerary subunits COX4I, COX5A, COX5B, COX6A, COX6B, COX6C, COX7A, COX7B, COX7C, COX8 and NDUFA4, which are encoded in the nuclear genome. The complex exists as a monomer or a dimer and forms supercomplexes (SCs) in the inner mitochondrial membrane with NADH-ubiquinone oxidoreductase (complex I, CI) and ubiquinol-cytochrome c oxidoreductase (cytochrome b-c1 complex, complex III, CIII), resulting in different assemblies (supercomplex SCI(1)III(2)IV(1) and megacomplex MCI(2)III(2)IV(2)). Found in a complex with TMEM177, COA6, COX18, COX20, SCO1 and SCO2. Interacts with TMEM177 in a COX20-dependent manner. Interacts with COX20. Interacts with COX16. Cu cation serves as cofactor.

The protein localises to the mitochondrion inner membrane. It catalyses the reaction 4 Fe(II)-[cytochrome c] + O2 + 8 H(+)(in) = 4 Fe(III)-[cytochrome c] + 2 H2O + 4 H(+)(out). Its function is as follows. Component of the cytochrome c oxidase, the last enzyme in the mitochondrial electron transport chain which drives oxidative phosphorylation. The respiratory chain contains 3 multisubunit complexes succinate dehydrogenase (complex II, CII), ubiquinol-cytochrome c oxidoreductase (cytochrome b-c1 complex, complex III, CIII) and cytochrome c oxidase (complex IV, CIV), that cooperate to transfer electrons derived from NADH and succinate to molecular oxygen, creating an electrochemical gradient over the inner membrane that drives transmembrane transport and the ATP synthase. Cytochrome c oxidase is the component of the respiratory chain that catalyzes the reduction of oxygen to water. Electrons originating from reduced cytochrome c in the intermembrane space (IMS) are transferred via the dinuclear copper A center (CU(A)) of subunit 2 and heme A of subunit 1 to the active site in subunit 1, a binuclear center (BNC) formed by heme A3 and copper B (CU(B)). The BNC reduces molecular oxygen to 2 water molecules using 4 electrons from cytochrome c in the IMS and 4 protons from the mitochondrial matrix. The polypeptide is Cytochrome c oxidase subunit 2 (mt-co2) (Oncorhynchus mykiss (Rainbow trout)).